A 1153-amino-acid polypeptide reads, in one-letter code: MAEPRGPVDHGVQIRFITEPAGDAQMRTGRRPAKDARANTYGVAVRVQGIAGQPFVVLNSGEKGSESFGVQIKGAHRQGPPGAPHSDLELPAEHSRPLAQENAGTWQGSVSDEELGDPWRGRLLRSQSQASLLGPAPLGPGHRSTSLLELGPPGLGAGSAIDTAPLSSVDTLIHKFDRHQGGQARGRTGRRMRALPAEQRKRSQSLDSRHLRDPPEDRRSPIPWAPPSRPGSAGSSKQPAPKPIPTSSYSRARQTQDWVLQNFEEPRTRAQDPAVLQFKSTPDLLRDQQEAAPPGSVEHVKAALYGILREGSSESDASVRRKVSLVLEQMQPLVMTTGSAKVLAGQGELAQKVEELQRKLDEEVKKRQVLEPSRLELEQQLEEKAEECLRLQELLERQKGETRQSGTELQNLRLLLDQAGRVRSELETQVMELQDQLKQGPVPAKEGLMKDLLETRELLEEVLEGKQRVEEQLRQRERELTALKGALKEEVASRDQEVEHVRQQCQRDTEQLRKSIQDASQDQAALEAERQKMSALVRGLQRELEETSEETGHWQTMFQKNKEELRAAKQELLQLRMEKDEMEEELGEKMEALQRELGQARAGAGGSRQVEELRKLQGEAERVRELEQQNLQLQKKTQQLSQDCAEATKARGARMAAEAEAALLVQRRTAVETTLQETQGENDEFRRRILGLEQQLKETRGLAEGGEAAEARLRDKLQRLEVEKQRLEEALSEAQAEEGSLAAAKRALEARLEEAQRGLSRMGQEQQALSRALEEEGKQREALRRGKAELEEQKRLLDRTVERLNKELEQIGEDSKQALHQLQSQLEDYKEKSRREVADAQRQAKEWASEAEKSSGGLSRLQDETQRLRQTLQASQADLDTARLDKELLAQRLQGLEQEAEKKRRSQDDRTRQVKSLEEKVSRLEMELDEERNTVELLTDRINRSRDQVDQLRTELMQERSARQDLECDKISLERQNKDLKGRLASLEGFQKPSASLSQLESQNRELQERLQAEDREKTVLQSTNRKLERRVKELSIQIDDERQHVNDQKDQLSLKVKALKRQVDEAEEEIERLDGLRKKAQRELEEQHEANEQLQARIRALEKDSWRKAARSAAESSLQQEGLSSDEEFDGVYNPNSIASLLTESGLQTSSC.

Positions 1 to 342 (MAEPRGPVDH…LVMTTGSAKV (342 aa)) are head. The segment at 17–37 (ITEPAGDAQMRTGRRPAKDAR) is disordered. The ZIM signature appears at 38 to 52 (ANTYGVAVRVQGIAG). Positions 44–57 (AVRVQGIAGQPFVV) are interaction with TJP1/ZO1. S86, S126, S128, S131, S146, S205, S208, and S324 each carry phosphoserine. Disordered stretches follow at residues 131-151 (SLLGPAPLGPGHRSTSLLELG) and 177-253 (DRHQ…SRAR). The span at 207–220 (DSRHLRDPPEDRRS) shows a compositional bias: basic and acidic residues. A coiled-coil region spans residues 343-1110 (LAGQGELAQK…ALEKDSWRKA (768 aa)). Residue K562 is modified to N6-acetyllysine. Disordered regions lie at residues 755–796 (AQRG…QKRL), 823–861 (QSQLEDYKEKSRREVADAQRQAKEWASEAEKSSGGLSRL), and 1110–1131 (AARSAAESSLQQEGLSSDEEFD). Composition is skewed to basic and acidic residues over residues 772–796 (ALEEEGKQREALRRGKAELEEQKRL) and 827–853 (EDYKEKSRREVADAQRQAKEWASEAEK). Residues 1111–1153 (ARSAAESSLQQEGLSSDEEFDGVYNPNSIASLLTESGLQTSSC) are tail. Polar residues predominate over residues 1115–1124 (AESSLQQEGL). Phosphoserine is present on residues S1125 and S1126.

It belongs to the cingulin family. Homodimer. Interacts with TJP1/ZO1 and SPEF1.

It localises to the cell junction. The protein resides in the tight junction. Probably plays a role in the formation and regulation of the tight junction (TJ) paracellular permeability barrier. The chain is Cingulin from Sorex araneus (Eurasian common shrew).